Consider the following 539-residue polypeptide: 4-hydroxybenzoate--CoA/benzoate--CoA ligase (539 aa).

Belongs to the ATP-dependent AMP-binding enzyme family. Benzoate-CoA ligase subfamily. As to quaternary structure, homodimer. In terms of processing, the N-terminus is blocked.

The enzyme catalyses 4-hydroxybenzoate + ATP + CoA = 4-hydroxybenzoyl-CoA + AMP + diphosphate. The catalysed reaction is benzoate + ATP + CoA = benzoyl-CoA + AMP + diphosphate. Its function is as follows. Catalyzes the ligation of 4-hydroxybenzoate, benzoate or cyclohex-1,4-dienecarboxylate and CoA at the expense of ATP. The enzyme shows low activity towards cyclo-2,5-dienecarboxylate, 4-fluorobenzoate, 4-chlorobenzoate and 2-methoxybenzoate. The chain is 4-hydroxybenzoate--CoA/benzoate--CoA ligase (hbaA) from Rhodopseudomonas palustris (strain ATCC BAA-98 / CGA009).